We begin with the raw amino-acid sequence, 78 residues long: UPF0349 protein RBAM_029300 (78 aa).

The protein belongs to the UPF0349 family.

The protein is UPF0349 protein RBAM_029300 of Bacillus velezensis (strain DSM 23117 / BGSC 10A6 / LMG 26770 / FZB42) (Bacillus amyloliquefaciens subsp. plantarum).